Reading from the N-terminus, the 394-residue chain is Phosphoglycerate kinase (394 aa).

Residues 21-23, Arg36, 59-62, Arg118, and Arg151 each bind substrate; these read DFN and HLGR. Phosphoserine is present on Ser183. 2 residues coordinate ATP: Lys201 and Gly292. The residue at position 299 (Thr299) is a Phosphothreonine. Residues Glu323 and 350–353 each bind ATP; that span reads GGDS.

The protein belongs to the phosphoglycerate kinase family. As to quaternary structure, monomer.

The protein localises to the cytoplasm. The catalysed reaction is (2R)-3-phosphoglycerate + ATP = (2R)-3-phospho-glyceroyl phosphate + ADP. It functions in the pathway carbohydrate degradation; glycolysis; pyruvate from D-glyceraldehyde 3-phosphate: step 2/5. The polypeptide is Phosphoglycerate kinase (Bacillus thuringiensis subsp. konkukian (strain 97-27)).